We begin with the raw amino-acid sequence, 558 residues long: Autophagy-related protein 18 (558 aa).

One copy of the WD 1 repeat lies at 4 to 42 (DYPPTINFINFNQTGSCISIATDDGFSIYNCDPFGKFYS). A disordered region spans residues 176–264 (SSSSSQVEPP…FQQTGITGSS (89 aa)). Positions 188–201 (PQQRSNFSGNTLET) are enriched in polar residues. The segment covering 210-252 (GSNNSNNGNNNNNNNNNNNNNNNNNNNNNNNNNNSNNEENSNS) has biased composition (low complexity). The segment covering 253–264 (KSFQQTGITGSS) has biased composition (polar residues). WD repeat units follow at residues 290–330 (AHKG…KIYQ) and 335–374 (TYPTEVYSLAFSKDNQFLAATSSSKTVHIFKLGKIMETSS). A L/FRRG motif motif is present at residues 331–335 (FRRGT). The tract at residues 400–432 (SSESLTESQSKDPHVDTSRSTVGRMIRKSSQQL) is disordered.

The protein belongs to the WD repeat PROPPIN family. In terms of assembly, component of the PI(3,5)P2 regulatory complex.

It localises to the preautophagosomal structure membrane. Its subcellular location is the vacuole membrane. The protein resides in the endosome membrane. Functionally, the PI(3,5)P2 regulatory complex regulates both the synthesis and turnover of phosphatidylinositol 3,5-bisphosphate (PtdIns(3,5)P2). Necessary for proper vacuole morphology. Plays an important role in osmotically-induced vacuole fragmentation. Required for cytoplasm to vacuole transport (Cvt) vesicle formation, pexophagy and starvation-induced autophagy. Involved in correct ATG9 trafficking to the pre-autophagosomal structure. Might also be involved in premeiotic DNA replication. The sequence is that of Autophagy-related protein 18 (ATG18) from Vanderwaltozyma polyspora (strain ATCC 22028 / DSM 70294 / BCRC 21397 / CBS 2163 / NBRC 10782 / NRRL Y-8283 / UCD 57-17) (Kluyveromyces polysporus).